Consider the following 173-residue polypeptide: uncharacterized protein (173 aa).

Residues 1-11 (MLCAKNKKDPK) show a composition bias toward basic and acidic residues. Residues 1–173 (MLCAKNKKDP…EKMEKSEKAY (173 aa)) form a disordered region. Over residues 17 to 41 (FSETSKVQNVQNTQPKPAAPSQMSI) the composition is skewed to polar residues. Basic and acidic residues-rich tracts occupy residues 56-109 (KSVE…KADN) and 120-144 (AKKE…EAKK). Residues 145–156 (KESRRQKKMRNK) show a composition bias toward basic residues. The segment covering 157-173 (NSKEGSVEKMEKSEKAY) has biased composition (basic and acidic residues).

This is an uncharacterized protein from Caenorhabditis elegans.